The following is a 158-amino-acid chain: Egg cell-secreted protein 1.1 (158 aa).

An N-terminal signal peptide occupies residues 1-27 (MASKSSFMATFNIVTLMLMVASSTVTA). A glycan (N-linked (GlcNAc...) asparagine) is linked at N122.

The protein belongs to the plant egg cell-secreted peptide family. Restricted to female reproductive tissues, specifically accumulating in storage vesicles of the unfertilized egg cell.

It is found in the cytoplasmic vesicle. The protein resides in the secreted. Its function is as follows. Involved in the regulation of gamete interactions during the double fertilization and to prevent multiple-pollen tube attraction; mediates the redistribution of the gamete fusogen HAP2/GCS1 to the cell surface after secretion upon sperm arrival. This is Egg cell-secreted protein 1.1 (EC1.1) from Arabidopsis thaliana (Mouse-ear cress).